A 418-amino-acid chain; its full sequence is Light-independent protochlorophyllide reductase subunit N (418 aa).

Cysteine 17, cysteine 42, and cysteine 103 together coordinate [4Fe-4S] cluster.

Belongs to the BchN/ChlN family. In terms of assembly, protochlorophyllide reductase is composed of three subunits; ChlL, ChlN and ChlB. Forms a heterotetramer of two ChlB and two ChlN subunits. The cofactor is [4Fe-4S] cluster.

It carries out the reaction chlorophyllide a + oxidized 2[4Fe-4S]-[ferredoxin] + 2 ADP + 2 phosphate = protochlorophyllide a + reduced 2[4Fe-4S]-[ferredoxin] + 2 ATP + 2 H2O. It participates in porphyrin-containing compound metabolism; chlorophyll biosynthesis (light-independent). Component of the dark-operative protochlorophyllide reductase (DPOR) that uses Mg-ATP and reduced ferredoxin to reduce ring D of protochlorophyllide (Pchlide) to form chlorophyllide a (Chlide). This reaction is light-independent. The NB-protein (ChlN-ChlB) is the catalytic component of the complex. This Prochlorococcus marinus (strain AS9601) protein is Light-independent protochlorophyllide reductase subunit N.